A 622-amino-acid polypeptide reads, in one-letter code: MEIEEDLNLKILEDVKKLYLQSFDYIKNGISSSLPSDKKFLADDDIDLSRITFLYKFISVNPTLLLINEKTQAKRRIFQGEYLYGKKKIQFNIIAKNLEIERELIQFFKKPYQCYIMHNVQVFQMLNKNKNNNVVEFMDSEDLQSSVDCQLYYLIDESSHVLEDDSMDFISTLTRLSDSFNSNEFVFETNYSIQISQMPKPLNTTHFKLLQPKVVNSFEGVILQVQEGKNILQIEELIDQVYLNSRRDRFYILKVANGKNYMDFIEVYLVYDNEDQEAKQQLQFYLKPFQRILIFQSLKHFTKNLKLFMISFFYSSGVQPNNSNVKNFLVSHKGVEFFSRFDIQKNELLCKDLIKSYNKLPLSNISKLLEDEGVMIRSNMKFQVRVKKVKYFKIRLNCLNCKQEWTVGLKNCINCKGQQSYISYNIQVLVQDQHFLEQQAYIYLYDDLAAQFFNITESEKKELHLHLTKNETFIQLYYSFNKDYPLSIIKFKDKIFNKDITNCIVAYPFADIDNKIFNSQQQIIQDENLRIESEKFIQNFTEDNNLQESKLYYEKFKSKNKQQIFVNGTYISTNYSQGQKICLKPIPCLKVMYVFPQEDIKLSALKIIEEINQLKIQIDQLN.

Component of the telomerase holoenzyme complex, composed of the catalytic core (the catalytic subunit TERT, the telomerase RNA template component TER and TAP65/p65), which is associated with two heterotrimeric subcomplexes: (i) the replication protein A (RPA)-related subcomplex, composed of TEB1, RPA2/TEB2 and RPA3/TEB3 and (ii) the CST-like subcomplex, composed of TAP75/p75, TAP45/p45 and TAP19/p19. TEB1 and the CST-like subcomplex are tethered to the catalytic core by TAP50/p50.

The protein resides in the chromosome. Its subcellular location is the telomere. Functionally, component of a CST-like subcomplex of the holoenzyme telomerase ribonucleoprotein complex, which stimulates telomerase complementary-strand synthesis. Telomerase is an essential ribonucleoprotein enzyme that copies new telomeric repeats onto chromosome ends by repetitively synthesizing the short telomere-repeat sequence 5'-TTGGGG-3' using an RNA template component TER. The CST-like subcomplex (also named 7-4-1) binds telomeric single-stranded DNA and coordinates telomere G-strand and C-strand synthesis. This Tetrahymena thermophila (strain SB210) protein is Telomerase-associated protein of 75 kDa.